Here is a 522-residue protein sequence, read N- to C-terminus: Probable G-protein coupled receptor egl-47 (522 aa).

The next 7 helical transmembrane spans lie at 140–160 (IIKL…NSFL), 184–204 (ASMI…LSAI), 238–258 (FVFF…KVVE), 276–296 (FILV…YHLY), 345–365 (PLLL…LYFL), 398–418 (ICWA…ICST), and 472–492 (LERT…LLLF).

It belongs to the G-protein coupled receptor family. In terms of tissue distribution, expressed in some neurons in the head, the HSN neurons and the PVQ interneurons of the tail.

It localises to the membrane. In terms of biological role, orphan receptor. Regulates egg-laying probably by activating guanine nucleotide-binding protein goa-1, in the hermaphrodite-specific neurons (HSNs). The sequence is that of Probable G-protein coupled receptor egl-47 from Caenorhabditis elegans.